Here is a 199-residue protein sequence, read N- to C-terminus: Fe/S biogenesis protein NfuA (199 aa).

2 residues coordinate [4Fe-4S] cluster: Cys-151 and Cys-154.

The protein belongs to the NfuA family. As to quaternary structure, homodimer. It depends on [4Fe-4S] cluster as a cofactor.

Its function is as follows. Involved in iron-sulfur cluster biogenesis. Binds a 4Fe-4S cluster, can transfer this cluster to apoproteins, and thereby intervenes in the maturation of Fe/S proteins. Could also act as a scaffold/chaperone for damaged Fe/S proteins. This is Fe/S biogenesis protein NfuA from Xanthomonas oryzae pv. oryzae (strain MAFF 311018).